Reading from the N-terminus, the 119-residue chain is Large ribosomal subunit protein bL20 (119 aa).

It belongs to the bacterial ribosomal protein bL20 family.

In terms of biological role, binds directly to 23S ribosomal RNA and is necessary for the in vitro assembly process of the 50S ribosomal subunit. It is not involved in the protein synthesizing functions of that subunit. This is Large ribosomal subunit protein bL20 from Nitrobacter hamburgensis (strain DSM 10229 / NCIMB 13809 / X14).